A 432-amino-acid polypeptide reads, in one-letter code: Serine hydroxymethyltransferase 1 (432 aa).

Residues L131 and 135 to 137 (GHL) each bind (6S)-5,6,7,8-tetrahydrofolate. Residue K240 is modified to N6-(pyridoxal phosphate)lysine.

The protein belongs to the SHMT family. In terms of assembly, homodimer. Pyridoxal 5'-phosphate serves as cofactor.

The protein localises to the cytoplasm. It carries out the reaction (6R)-5,10-methylene-5,6,7,8-tetrahydrofolate + glycine + H2O = (6S)-5,6,7,8-tetrahydrofolate + L-serine. Its pathway is one-carbon metabolism; tetrahydrofolate interconversion. It functions in the pathway amino-acid biosynthesis; glycine biosynthesis; glycine from L-serine: step 1/1. In terms of biological role, catalyzes the reversible interconversion of serine and glycine with tetrahydrofolate (THF) serving as the one-carbon carrier. This reaction serves as the major source of one-carbon groups required for the biosynthesis of purines, thymidylate, methionine, and other important biomolecules. Also exhibits THF-independent aldolase activity toward beta-hydroxyamino acids, producing glycine and aldehydes, via a retro-aldol mechanism. The polypeptide is Serine hydroxymethyltransferase 1 (Rhodopseudomonas palustris (strain ATCC BAA-98 / CGA009)).